The primary structure comprises 122 residues: Large ribosomal subunit protein uL14c (122 aa).

The protein belongs to the universal ribosomal protein uL14 family. Part of the 50S ribosomal subunit.

The protein resides in the plastid. The protein localises to the chloroplast. Binds to 23S rRNA. This Nicotiana tomentosiformis (Tobacco) protein is Large ribosomal subunit protein uL14c.